The sequence spans 335 residues: 3-hydroxy-3-methylglutaryl-CoA lyase, cytoplasmic (335 aa).

The N-myristoyl glycine moiety is linked to residue Gly2. The 268-residue stretch at 43 to 310 folds into the Pyruvate carboxyltransferase domain; it reads VKIVEVGPRD…ETGVDLLKVM (268 aa). Arg51 contributes to the substrate binding site. A divalent metal cation is bound at residue Asp52. Lys58 is modified (N6-acetyllysine). A divalent metal cation-binding residues include His243 and His245. Cys276 is a catalytic residue. Asn285 is an a divalent metal cation binding site.

This sequence belongs to the HMG-CoA lyase family. Requires a divalent metal cation as cofactor.

It localises to the cytoplasm. The protein resides in the cytosol. It is found in the endoplasmic reticulum membrane. The enzyme catalyses (3S)-3-hydroxy-3-methylglutaryl-CoA = acetoacetate + acetyl-CoA. Its pathway is metabolic intermediate metabolism; (S)-3-hydroxy-3-methylglutaryl-CoA degradation; acetoacetate from (S)-3-hydroxy-3-methylglutaryl-CoA: step 1/1. Non-mitochondrial 3-hydroxy-3-methylglutaryl-CoA lyase that catalyzes a cation-dependent cleavage of (S)-3-hydroxy-3-methylglutaryl-CoA into acetyl-CoA and acetoacetate, a key step in ketogenesis, the products of which support energy production in nonhepatic animal tissues. This is 3-hydroxy-3-methylglutaryl-CoA lyase, cytoplasmic (hmgcll1) from Danio rerio (Zebrafish).